The chain runs to 137 residues: Basic phospholipase A2 homolog MT1 (137 aa).

The signal sequence occupies residues 1–16 (MRTLWIVALLLVGVEG). Disulfide bonds link C42/C131, C44/C60, C59/C111, C65/C137, C66/C104, C73/C97, and C91/C102. Residues 121 to 133 (KKYKAYFKFKCKK) form an important for membrane-damaging activities in eukaryotes and bacteria; heparin-binding region.

This sequence belongs to the phospholipase A2 family. Group II subfamily. K49 sub-subfamily. Binds to heparin. As to expression, expressed by the venom gland.

It is found in the secreted. Its activity is regulated as follows. Heparin and wedelolactone inhibit the myotoxic activity. The PLA2 inhibitor, para-bromophenacyl bromide (BPB), inhibits the myotoxic activity. In terms of biological role, snake venom phospholipase A2 homolog that lacks enzymatic activity. Has myotoxic activities. A model of myotoxic mechanism has been proposed: an apo Lys49-PLA2 is activated by the entrance of a hydrophobic molecule (e.g. fatty acid) at the hydrophobic channel of the protein leading to a reorientation of a monomer. This reorientation causes a transition between 'inactive' to 'active' states, causing alignment of C-terminal and membrane-docking sites (MDoS) side-by-side and putting the membrane-disruption sites (MDiS) in the same plane, exposed to solvent and in a symmetric position for both monomers. The MDoS region stabilizes the toxin on membrane by the interaction of charged residues with phospholipid head groups. Subsequently, the MDiS region destabilizes the membrane with penetration of hydrophobic residues. This insertion causes a disorganization of the membrane, allowing an uncontrolled influx of ions (i.e. calcium and sodium), and eventually triggering irreversible intracellular alterations and cell death. The protein is Basic phospholipase A2 homolog MT1 of Agkistrodon contortrix laticinctus (Broad-banded copperhead).